Here is a 185-residue protein sequence, read N- to C-terminus: Ribosome-recycling factor (185 aa).

It belongs to the RRF family.

The protein resides in the cytoplasm. In terms of biological role, responsible for the release of ribosomes from messenger RNA at the termination of protein biosynthesis. May increase the efficiency of translation by recycling ribosomes from one round of translation to another. The chain is Ribosome-recycling factor from Thermotoga sp. (strain RQ2).